A 1165-amino-acid chain; its full sequence is Symplekin (1165 aa).

5 HEAT repeats span residues 23-58 (TATARAKVVDWCNELVIASPSTKCELLAKVQETVLG), 61-95 (AELAEEFLESVLSLAHDSNMEVRKQVVAFVEQVCK), 98-140 (VELL…YLCS), 147-186 (SAEQAWNILSLIKAQILDMIDNENDGIRTNAIKFLEGVVV), and 218-257 (KLQEEGNNILDILLQFHGTTHISSVNLIACTSSLCTIAKM). A disordered region spans residues 365-384 (DQQQREMELDTEELERQKQK). A compositionally biased stretch (basic and acidic residues) spans 367–384 (QQREMELDTEELERQKQK).

It belongs to the Symplekin family. As to quaternary structure, interacts with Cpsf73 and Cpsf100 forming a core cleavage factor required for both polyadenylated and histone mRNA processing. Interacts with Slbp and Lsm11.

The protein localises to the nucleus. Component of a protein complex required for cotranscriptional processing of 3'-ends of polyadenylated and histone pre-mRNA. Involved in germline stem cell transit amplification, differentiation and mitosis-to-meiosis transition. The protein is Symplekin of Drosophila melanogaster (Fruit fly).